Here is a 160-residue protein sequence, read N- to C-terminus: UPF0178 protein BB1267 (160 aa).

The protein belongs to the UPF0178 family.

The polypeptide is UPF0178 protein BB1267 (Bordetella bronchiseptica (strain ATCC BAA-588 / NCTC 13252 / RB50) (Alcaligenes bronchisepticus)).